The sequence spans 229 residues: uncharacterized protein (229 aa).

The tract at residues 1–102 is disordered; that stretch reads MKLLGRKKSY…AASKAQITDR (102 aa). Positions 73-94 are enriched in basic residues; that stretch reads ARRKSLAPPKCHRAERRAKRAA. The next 2 membrane-spanning stretches (helical) occupy residues 137–157 and 159–179; these read LGLFTPSALVLLFITFGVPQL and LYMSPAMLVLLSVMGIDGIIL.

It localises to the cell membrane. This is an uncharacterized protein from Mycobacterium leprae (strain TN).